Here is a 96-residue protein sequence, read N- to C-terminus: Co-chaperonin GroES (96 aa).

The protein belongs to the GroES chaperonin family. Heptamer of 7 subunits arranged in a ring. Interacts with the chaperonin GroEL.

It is found in the cytoplasm. Its function is as follows. Together with the chaperonin GroEL, plays an essential role in assisting protein folding. The GroEL-GroES system forms a nano-cage that allows encapsulation of the non-native substrate proteins and provides a physical environment optimized to promote and accelerate protein folding. GroES binds to the apical surface of the GroEL ring, thereby capping the opening of the GroEL channel. The chain is Co-chaperonin GroES from Haemophilus influenzae (strain PittEE).